The sequence spans 491 residues: MNANELTIADARDALAKGELSAVDLTMACLTAIDAGTPLNAFVHATPEIALDQARAADARRGAGAGALNGIPLGIKDLFCTRGVASQAASNILKGFKPEYESTVTSKLFEAGAVMLGKLNMDEFAMGSSNETSCYGDAVNPWKVDDRRLTPGGSSGGSAAAVAADLCLAATGTDTGGSIRQPAAFTGIVGIKPTYGRVSRWGIVAFASSLDQAGPMTKSVRDAAILLGAMAGHDPKDSTSADIPVPDFEAALTGDIRGRKIGIPREYRMEGMPAEIEALWARGREMLADAGAEIVDISLPHTKYALPAYYVIAPAEASSNLARYDGVRYGHRARLGQGDGIVDMYEKTRAEGFGKEVQRRVMIGTYVLSAGFYDAYYNRARKVRALIKRDFDEAFAAGVDAILTPATPSSAFGLGEMADADPVAMYLNDVFTVTVNLAGLPGISVPVGLDAKGLPLGLQLIGRPWDEAGLLNHAHVLERAAGFVEKPRKWW.

Residues Lys76 and Ser154 each act as charge relay system in the active site. Ser178 functions as the Acyl-ester intermediate in the catalytic mechanism.

This sequence belongs to the amidase family. GatA subfamily. In terms of assembly, heterotrimer of A, B and C subunits.

The catalysed reaction is L-glutamyl-tRNA(Gln) + L-glutamine + ATP + H2O = L-glutaminyl-tRNA(Gln) + L-glutamate + ADP + phosphate + H(+). Its function is as follows. Allows the formation of correctly charged Gln-tRNA(Gln) through the transamidation of misacylated Glu-tRNA(Gln) in organisms which lack glutaminyl-tRNA synthetase. The reaction takes place in the presence of glutamine and ATP through an activated gamma-phospho-Glu-tRNA(Gln). In Cereibacter sphaeroides (strain ATCC 17023 / DSM 158 / JCM 6121 / CCUG 31486 / LMG 2827 / NBRC 12203 / NCIMB 8253 / ATH 2.4.1.) (Rhodobacter sphaeroides), this protein is Glutamyl-tRNA(Gln) amidotransferase subunit A.